The following is a 198-amino-acid chain: Recombination protein RecR (198 aa).

The C4-type zinc finger occupies 58 to 73 (CSVCGNYTDTDPCAIC). The region spanning 81–175 (SLVCVVEEPK…KVTRIAHGIP (95 aa)) is the Toprim domain.

The protein belongs to the RecR family.

Its function is as follows. May play a role in DNA repair. It seems to be involved in an RecBC-independent recombinational process of DNA repair. It may act with RecF and RecO. The sequence is that of Recombination protein RecR from Clostridium acetobutylicum (strain ATCC 824 / DSM 792 / JCM 1419 / IAM 19013 / LMG 5710 / NBRC 13948 / NRRL B-527 / VKM B-1787 / 2291 / W).